Here is a 741-residue protein sequence, read N- to C-terminus: Catalase-peroxidase (741 aa).

Residues 1-23 form the signal peptide; it reads MLKKIITALGMSGMLLASSNAIA. The segment at residues 102-223 is a cross-link (tryptophyl-tyrosyl-methioninium (Trp-Tyr) (with M-249)); that stretch reads WHDAGTYRIY…YAATQMGLIY (122 aa). H103 functions as the Proton acceptor in the catalytic mechanism. Positions 223–249 form a cross-link, tryptophyl-tyrosyl-methioninium (Tyr-Met) (with W-102); it reads YVNPEGPDGKPDIKGAASEIRQAFRAM. H264 serves as a coordination point for heme b.

Belongs to the peroxidase family. Peroxidase/catalase subfamily. As to quaternary structure, homodimer or homotetramer. Requires heme b as cofactor. Formation of the three residue Trp-Tyr-Met cross-link is important for the catalase, but not the peroxidase activity of the enzyme.

The enzyme catalyses H2O2 + AH2 = A + 2 H2O. The catalysed reaction is 2 H2O2 = O2 + 2 H2O. In terms of biological role, bifunctional enzyme with both catalase and broad-spectrum peroxidase activity. The protein is Catalase-peroxidase of Francisella tularensis subsp. holarctica (strain FTNF002-00 / FTA).